The primary structure comprises 36 residues: Zinc metalloproteinase-disintegrin-like VaH1 (36 aa).

The region spanning 1–36 is the Peptidase M12B domain; it reads MVTKYSSIFMSPILSNPPILYFSDCSREXYQKXLTN.

Belongs to the venom metalloproteinase (M12B) family. P-III subfamily. P-IIIa sub-subfamily. As to quaternary structure, monomer. It depends on Zn(2+) as a cofactor. In terms of processing, the N-terminus is blocked. Post-translationally, glycosylated. Expressed by the venom gland.

The protein resides in the secreted. With respect to regulation, inhibited by EDTA, but not inhibited by iodoacetamide, PMSF and pepstatin A. Snake venom zinc metalloprotease that exhibits strong hemorrhagic activity. It also degrades alpha-chain of fibrinogen (FGA), but not the beta- and the gamma-chains. Possesses potent azocaseinolytic activity and cleaves insulin B-chain, hydrolyzing it at positions Ala(14)-Leu(15), followed by Tyr(16)-Leu(17) and His(10)-Leu(11). In vivo, subcutaneous injection into mice induces strong hemorrhage. The protein is Zinc metalloproteinase-disintegrin-like VaH1 of Vipera ammodytes ammodytes (Western sand viper).